An 828-amino-acid chain; its full sequence is Periplasmic nitrate reductase (828 aa).

The tat-type signal signal peptide spans 1 to 31 (MKLSRRSFMKANAVAAAAAAAGLSVPGVARA). The region spanning 39–95 (IKWDKAPCRFCGTGCGVLVGTQQGRVVACQGDPDAPVNRGLNCIKGYFLPKIMYGKD) is the 4Fe-4S Mo/W bis-MGD-type domain. Residues cysteine 46, cysteine 49, cysteine 53, and cysteine 81 each coordinate [4Fe-4S] cluster. Mo-bis(molybdopterin guanine dinucleotide) is bound by residues lysine 83, glutamine 150, asparagine 175, cysteine 179, 212 to 219 (WGSNMAEM), 243 to 247 (STYQH), 262 to 264 (QSD), methionine 372, glutamine 376, asparagine 482, 508 to 509 (SD), lysine 531, aspartate 558, and 718 to 727 (TGRVLEHWHT). Phenylalanine 794 contributes to the substrate binding site. 2 residues coordinate Mo-bis(molybdopterin guanine dinucleotide): asparagine 802 and lysine 819.

Belongs to the prokaryotic molybdopterin-containing oxidoreductase family. NasA/NapA/NarB subfamily. In terms of assembly, component of the periplasmic nitrate reductase NapAB complex composed of NapA and NapB. [4Fe-4S] cluster is required as a cofactor. It depends on Mo-bis(molybdopterin guanine dinucleotide) as a cofactor. Post-translationally, predicted to be exported by the Tat system. The position of the signal peptide cleavage has not been experimentally proven.

Its subcellular location is the periplasm. The enzyme catalyses 2 Fe(II)-[cytochrome] + nitrate + 2 H(+) = 2 Fe(III)-[cytochrome] + nitrite + H2O. In terms of biological role, catalytic subunit of the periplasmic nitrate reductase complex NapAB. Receives electrons from NapB and catalyzes the reduction of nitrate to nitrite. The sequence is that of Periplasmic nitrate reductase from Escherichia coli O1:K1 / APEC.